Consider the following 427-residue polypeptide: Methylthioribose kinase 2 (427 aa).

Residues 49-53 (DGNLN), lysine 68, and 122-124 (RYI) contribute to the ATP site. Asparagine 51 serves as a coordination point for substrate. Aspartate 243 is a binding site for substrate. 260 to 262 (DPE) is a binding site for ATP. Arginine 370 lines the substrate pocket.

Belongs to the methylthioribose kinase family. In terms of assembly, homodimer.

The catalysed reaction is 5-(methylsulfanyl)-D-ribose + ATP = 5-(methylsulfanyl)-alpha-D-ribose 1-phosphate + ADP + H(+). The protein operates within amino-acid biosynthesis; L-methionine biosynthesis via salvage pathway; S-methyl-5-thio-alpha-D-ribose 1-phosphate from S-methyl-5'-thioadenosine (hydrolase route): step 2/2. Catalyzes the phosphorylation of methylthioribose into methylthioribose-1-phosphate. In Oryza sativa subsp. japonica (Rice), this protein is Methylthioribose kinase 2 (MTK2).